Reading from the N-terminus, the 176-residue chain is Lipoprotein signal peptidase (176 aa).

Transmembrane regions (helical) follow at residues 26 to 46 (LWMAFALLVVVLDQFFKIVIV), 60 to 80 (FFNLVLVYNKGAAFSFLADAG), 82 to 102 (WQRWFFTGLGLVVGAFIVWLL), and 107 to 127 (GQKLFCFAVSLILGGAVGNVV). Active-site residues include Asp-137 and Asp-155. A helical transmembrane segment spans residues 147–167 (HWPAFNVADCAITVGAVLLIV).

Belongs to the peptidase A8 family.

It is found in the cell inner membrane. The catalysed reaction is Release of signal peptides from bacterial membrane prolipoproteins. Hydrolyzes -Xaa-Yaa-Zaa-|-(S,diacylglyceryl)Cys-, in which Xaa is hydrophobic (preferably Leu), and Yaa (Ala or Ser) and Zaa (Gly or Ala) have small, neutral side chains.. It participates in protein modification; lipoprotein biosynthesis (signal peptide cleavage). Its function is as follows. This protein specifically catalyzes the removal of signal peptides from prolipoproteins. The sequence is that of Lipoprotein signal peptidase from Cupriavidus pinatubonensis (strain JMP 134 / LMG 1197) (Cupriavidus necator (strain JMP 134)).